We begin with the raw amino-acid sequence, 431 residues long: Glutamate-1-semialdehyde 2,1-aminomutase (431 aa).

Residue Lys269 is modified to N6-(pyridoxal phosphate)lysine.

The protein belongs to the class-III pyridoxal-phosphate-dependent aminotransferase family. HemL subfamily. In terms of assembly, homodimer. Requires pyridoxal 5'-phosphate as cofactor.

It is found in the cytoplasm. It carries out the reaction (S)-4-amino-5-oxopentanoate = 5-aminolevulinate. It functions in the pathway porphyrin-containing compound metabolism; protoporphyrin-IX biosynthesis; 5-aminolevulinate from L-glutamyl-tRNA(Glu): step 2/2. The protein operates within porphyrin-containing compound metabolism; chlorophyll biosynthesis. The chain is Glutamate-1-semialdehyde 2,1-aminomutase from Pelodictyon phaeoclathratiforme (strain DSM 5477 / BU-1).